Reading from the N-terminus, the 348-residue chain is Phenylalanine--tRNA ligase alpha subunit (348 aa).

E259 serves as a coordination point for Mg(2+).

It belongs to the class-II aminoacyl-tRNA synthetase family. Phe-tRNA synthetase alpha subunit type 1 subfamily. In terms of assembly, tetramer of two alpha and two beta subunits. Mg(2+) serves as cofactor.

Its subcellular location is the cytoplasm. The catalysed reaction is tRNA(Phe) + L-phenylalanine + ATP = L-phenylalanyl-tRNA(Phe) + AMP + diphosphate + H(+). In Limosilactobacillus reuteri (strain DSM 20016) (Lactobacillus reuteri), this protein is Phenylalanine--tRNA ligase alpha subunit.